A 290-amino-acid chain; its full sequence is UPF0507 protein YML003W (290 aa).

The protein belongs to the UPF0507 family.

The sequence is that of UPF0507 protein YML003W from Saccharomyces cerevisiae (strain ATCC 204508 / S288c) (Baker's yeast).